Here is a 156-residue protein sequence, read N- to C-terminus: Protein-export protein SecB (156 aa).

It belongs to the SecB family. Homotetramer, a dimer of dimers. One homotetramer interacts with 1 SecA dimer.

It localises to the cytoplasm. Its function is as follows. One of the proteins required for the normal export of preproteins out of the cell cytoplasm. It is a molecular chaperone that binds to a subset of precursor proteins, maintaining them in a translocation-competent state. It also specifically binds to its receptor SecA. This chain is Protein-export protein SecB, found in Serratia proteamaculans (strain 568).